The sequence spans 208 residues: Protein GrpE (208 aa).

Basic and acidic residues predominate over residues 1-25 (MVDNKDFNEELKENIQEELDNETKA). Residues 1–38 (MVDNKDFNEELKENIQEELDNETKAENPNIDEEVEEVS) are disordered. A compositionally biased stretch (acidic residues) spans 29 to 38 (NIDEEVEEVS).

Belongs to the GrpE family. Homodimer.

It is found in the cytoplasm. Participates actively in the response to hyperosmotic and heat shock by preventing the aggregation of stress-denatured proteins, in association with DnaK and GrpE. It is the nucleotide exchange factor for DnaK and may function as a thermosensor. Unfolded proteins bind initially to DnaJ; upon interaction with the DnaJ-bound protein, DnaK hydrolyzes its bound ATP, resulting in the formation of a stable complex. GrpE releases ADP from DnaK; ATP binding to DnaK triggers the release of the substrate protein, thus completing the reaction cycle. Several rounds of ATP-dependent interactions between DnaJ, DnaK and GrpE are required for fully efficient folding. This chain is Protein GrpE, found in Clostridium perfringens (strain ATCC 13124 / DSM 756 / JCM 1290 / NCIMB 6125 / NCTC 8237 / Type A).